Reading from the N-terminus, the 880-residue chain is DNA double-strand break repair Rad50 ATPase (880 aa).

ATP contacts are provided by residues Arg-12, 32–38 (NGSGKSS), and Gln-138. Coiled coils occupy residues 225–336 (GELE…VIKE) and 391–744 (GEVI…QALN). Residues 397–494 (LESLEKERTE…NLRKLEIKLR (98 aa)) enclose the Zinc-hook domain. Zn(2+) contacts are provided by Cys-442 and Cys-445. 789 to 794 (FLSGGE) is a binding site for ATP.

It belongs to the SMC family. RAD50 subfamily. Homodimer. Forms a heterotetramer composed of two Mre11 subunits and two Rad50 subunits. The cofactor is Zn(2+).

Part of the Rad50/Mre11 complex, which is involved in the early steps of DNA double-strand break (DSB) repair. The complex may facilitate opening of the processed DNA ends to aid in the recruitment of HerA and NurA. Rad50 controls the balance between DNA end bridging and DNA resection via ATP-dependent structural rearrangements of the Rad50/Mre11 complex. This chain is DNA double-strand break repair Rad50 ATPase, found in Pyrococcus abyssi (strain GE5 / Orsay).